A 427-amino-acid polypeptide reads, in one-letter code: Gamma-glutamyl phosphate reductase (427 aa).

Belongs to the gamma-glutamyl phosphate reductase family.

The protein resides in the cytoplasm. The enzyme catalyses L-glutamate 5-semialdehyde + phosphate + NADP(+) = L-glutamyl 5-phosphate + NADPH + H(+). Its pathway is amino-acid biosynthesis; L-proline biosynthesis; L-glutamate 5-semialdehyde from L-glutamate: step 2/2. Catalyzes the NADPH-dependent reduction of L-glutamate 5-phosphate into L-glutamate 5-semialdehyde and phosphate. The product spontaneously undergoes cyclization to form 1-pyrroline-5-carboxylate. The polypeptide is Gamma-glutamyl phosphate reductase (Brucella melitensis biotype 2 (strain ATCC 23457)).